We begin with the raw amino-acid sequence, 439 residues long: Cysteine desulfurase-like protein ustD (439 aa).

The interval 1–25 (MKSVATSSLDDVDKDSVPLGSSING) is disordered. Pyridoxal 5'-phosphate is bound by residues 120-121 (TT), N206, and 255-257 (SWY). K258 is modified (N6-(pyridoxal phosphate)lysine).

This sequence belongs to the class-V pyridoxal-phosphate-dependent aminotransferase family. Requires pyridoxal 5'-phosphate as cofactor.

It participates in mycotoxin biosynthesis. Its function is as follows. Cysteine desulfurase-like protein; part of the gene cluster that mediates the biosynthesis of the secondary metabolite ustiloxin B, an antimitotic tetrapeptide. First, ustA is processed by the subtilisin-like endoprotease Kex2 that is outside the ustiloxin B gene cluster, at the C-terminal side of Arg-Lys, after transfer to Golgi apparatus through the endoplasmic reticulum (ER). Cleavage by KEX2 generates 16 peptides YAIG-I to YAIG-XVI. To process the precursor peptide further, at least two peptidases are necessary to cleave the N-terminal and C-terminal sides of the Tyr-Ala-Ile-Gly core peptide which serves as backbone for the synthesis of ustiloxin B, through cyclization and modification of the tyrosine with a non-protein coding amino acid, norvaline. One of the two peptidases must be the serine peptidase ustP; and the other pepdidase is probably ustH. Macrocyclization of the core peptide derived from ustA requires the tyrosinase ustQ, as well as the homologous oxidases ustYa and ustYb, and leads to the production of the first cyclization product N-desmethylustiloxin F. For the formation of N-desmethylustiloxin F, three oxidation steps are required, hydroxylation at the benzylic position, hydroxylation at either the aromatic ring of Tyr or beta-position of Ile, and oxidative cyclization. UstQ may catalyze the oxidation of a phenol moiety, whereas the ustYa and ustYb are most likely responsible for the remaining two-step oxidations. N-desmethylustiloxin F is then methylated by ustM to yield ustiloxin F which in turn substrate of the cytochrome P450 monooxygenase ustC which catalyzes the formation of S-deoxyustiloxin H. The flavoprotein monooxygenases ustF1 and ustF2 then participate in the modification of the side chain of S-deoxyustiloxin H, leading to the synthesis of an oxime intermediate, via ustiloxin H. Finally, carboxylative dehydration performed by the cysteine desulfurase-like protein ustD yields ustiloxin B. In Aspergillus flavus (strain ATCC 200026 / FGSC A1120 / IAM 13836 / NRRL 3357 / JCM 12722 / SRRC 167), this protein is Cysteine desulfurase-like protein ustD.